Consider the following 382-residue polypeptide: ATP phosphoribosyltransferase regulatory subunit (382 aa).

The protein belongs to the class-II aminoacyl-tRNA synthetase family. HisZ subfamily. Heteromultimer composed of HisG and HisZ subunits.

The protein resides in the cytoplasm. Its pathway is amino-acid biosynthesis; L-histidine biosynthesis; L-histidine from 5-phospho-alpha-D-ribose 1-diphosphate: step 1/9. In terms of biological role, required for the first step of histidine biosynthesis. May allow the feedback regulation of ATP phosphoribosyltransferase activity by histidine. In Lacticaseibacillus casei (strain BL23) (Lactobacillus casei), this protein is ATP phosphoribosyltransferase regulatory subunit.